The primary structure comprises 133 residues: Small ribosomal subunit protein eS24z (133 aa).

Positions 104–133 (KSRKQIKERKNRAKKIRGVKKTKAGDAKKK) are disordered. A compositionally biased stretch (basic residues) spans 109–125 (IKERKNRAKKIRGVKKT).

It belongs to the eukaryotic ribosomal protein eS24 family.

The polypeptide is Small ribosomal subunit protein eS24z (RPS24A) (Arabidopsis thaliana (Mouse-ear cress)).